A 423-amino-acid chain; its full sequence is Glycine-rich protein 1 (423 aa).

Residues 1–20 (MKKICLTFVFLLSLFPIYSS) form the signal peptide. Disordered stretches follow at residues 28–47 (TIES…AGPA), 78–133 (DDDN…SKKN), 159–219 (KGGS…GAGA), and 236–288 (GASA…ASAG). Positions 31–42 (SGSSKSSGSSVG) are enriched in low complexity. Basic and acidic residues-rich tracts occupy residues 81–93 (NKDK…DGKT) and 102–111 (QNGDDVKSDN). Residues 159-172 (KGGSANNGGEGGAT) show a composition bias toward gly residues. Over residues 173 to 183 (SAGSAGATSGA) the composition is skewed to low complexity. 2 stretches are compositionally biased toward gly residues: residues 205–219 (GAGG…GAGA) and 236–247 (GASAGAGAGGAQ). Low complexity predominate over residues 248–284 (GDAEAASAGSTAGSTSSGGAAASGASSGAGSSDSGQG).

Nacreous layer of shell (at protein level).

The protein resides in the secreted. In Pinctada maxima (Silver-lipped pearl oyster), this protein is Glycine-rich protein 1.